The chain runs to 80 residues: Translation initiation factor IF-1, chloroplastic (80 aa).

Residues 1 to 72 (MKKQNLIDME…TKGRIIYRLR (72 aa)) enclose the S1-like domain.

Belongs to the IF-1 family. In terms of assembly, component of the 30S ribosomal translation pre-initiation complex which assembles on the 30S ribosome in the order IF-2 and IF-3, IF-1 and N-formylmethionyl-tRNA(fMet); mRNA recruitment can occur at any time during PIC assembly.

The protein localises to the plastid. It localises to the chloroplast. Its function is as follows. One of the essential components for the initiation of protein synthesis. Stabilizes the binding of IF-2 and IF-3 on the 30S subunit to which N-formylmethionyl-tRNA(fMet) subsequently binds. Helps modulate mRNA selection, yielding the 30S pre-initiation complex (PIC). Upon addition of the 50S ribosomal subunit IF-1, IF-2 and IF-3 are released leaving the mature 70S translation initiation complex. This chain is Translation initiation factor IF-1, chloroplastic, found in Adiantum capillus-veneris (Maidenhair fern).